A 412-amino-acid chain; its full sequence is 43 kDa receptor-associated protein of the synapse (412 aa).

The N-myristoyl glycine moiety is linked to residue G2. TPR repeat units follow at residues 6-39, 83-116, 123-156, 163-196, 206-239, 246-279, and 286-319; these read TKQQ…SADP, TEGY…QGTT, GQVS…AHNN, CRVC…VNDY, AMSQ…ALQH, ALCL…MTEI, and IQVL…AEGL. Y196 bears the Phosphotyrosine mark. The RING-type zinc-finger motif lies at 363–403; sequence CGMCGESIGEKNNQLQALPCSHFFHLKCLQTNGTRGCPNCR.

It belongs to the RAPsyn family. Expressed in muscle fibers and in neurons.

It localises to the cell membrane. Its subcellular location is the postsynaptic cell membrane. The protein resides in the cytoplasm. It is found in the cytoskeleton. In terms of biological role, postsynaptic protein required for clustering of nicotinic acetylcholine receptors (nAChRs) at the neuromuscular junction. It may link the receptor to the underlying postsynaptic cytoskeleton, possibly by direct association with actin or spectrin. The sequence is that of 43 kDa receptor-associated protein of the synapse (RAPSN) from Gallus gallus (Chicken).